The sequence spans 72 residues: UPF0154 protein BLi02038/BL02936 (72 aa).

The helical transmembrane segment at 4–24 (WVVILVGVLALLAGVALGFFI) threads the bilayer.

This sequence belongs to the UPF0154 family.

The protein resides in the cell membrane. This Bacillus licheniformis (strain ATCC 14580 / DSM 13 / JCM 2505 / CCUG 7422 / NBRC 12200 / NCIMB 9375 / NCTC 10341 / NRRL NRS-1264 / Gibson 46) protein is UPF0154 protein BLi02038/BL02936.